The following is a 110-amino-acid chain: Large ribosomal subunit protein uL22 (110 aa).

The protein belongs to the universal ribosomal protein uL22 family. As to quaternary structure, part of the 50S ribosomal subunit.

In terms of biological role, this protein binds specifically to 23S rRNA; its binding is stimulated by other ribosomal proteins, e.g. L4, L17, and L20. It is important during the early stages of 50S assembly. It makes multiple contacts with different domains of the 23S rRNA in the assembled 50S subunit and ribosome. Its function is as follows. The globular domain of the protein is located near the polypeptide exit tunnel on the outside of the subunit, while an extended beta-hairpin is found that lines the wall of the exit tunnel in the center of the 70S ribosome. The polypeptide is Large ribosomal subunit protein uL22 (Acidovorax ebreus (strain TPSY) (Diaphorobacter sp. (strain TPSY))).